Consider the following 308-residue polypeptide: tRNA pseudouridine synthase B (308 aa).

Residue D48 is the Nucleophile of the active site.

Belongs to the pseudouridine synthase TruB family. Type 1 subfamily.

It carries out the reaction uridine(55) in tRNA = pseudouridine(55) in tRNA. Its function is as follows. Responsible for synthesis of pseudouridine from uracil-55 in the psi GC loop of transfer RNAs. This is tRNA pseudouridine synthase B from Histophilus somni (strain 129Pt) (Haemophilus somnus).